Consider the following 511-residue polypeptide: 2-isopropylmalate synthase (511 aa).

A compositionally biased stretch (basic and acidic residues) spans 1-16 (MTRKIDIFDTTLRDGE). Positions 1 to 23 (MTRKIDIFDTTLRDGEQSPGASM) are disordered. The Pyruvate carboxyltransferase domain maps to 5–268 (IDIFDTTLRD…HTDVVTQELT (264 aa)). Positions 14, 203, 205, and 239 each coordinate Mn(2+). Residues 392 to 511 (ALESVQVVCG…IQTTRSKQGK (120 aa)) form a regulatory domain region.

It belongs to the alpha-IPM synthase/homocitrate synthase family. LeuA type 1 subfamily. Homodimer. It depends on Mn(2+) as a cofactor.

The protein resides in the cytoplasm. It carries out the reaction 3-methyl-2-oxobutanoate + acetyl-CoA + H2O = (2S)-2-isopropylmalate + CoA + H(+). The protein operates within amino-acid biosynthesis; L-leucine biosynthesis; L-leucine from 3-methyl-2-oxobutanoate: step 1/4. Its function is as follows. Catalyzes the condensation of the acetyl group of acetyl-CoA with 3-methyl-2-oxobutanoate (2-ketoisovalerate) to form 3-carboxy-3-hydroxy-4-methylpentanoate (2-isopropylmalate). The sequence is that of 2-isopropylmalate synthase from Olsenella uli (strain ATCC 49627 / DSM 7084 / CCUG 31166 / CIP 109912 / JCM 12494 / LMG 11480 / NCIMB 702895 / VPI D76D-27C) (Lactobacillus uli).